A 285-amino-acid chain; its full sequence is Tumor necrosis factor ligand superfamily member 13B (285 aa).

The Cytoplasmic segment spans residues Met1–Lys46. Residues Leu47 to Tyr67 form a helical; Signal-anchor for type II membrane protein membrane-spanning segment. Residues Gln68–Leu285 are Extracellular-facing. Residues Ile114–Pro138 form a disordered region. Residue Asn124 is glycosylated (N-linked (GlcNAc...) asparagine). Residues Asp145–Leu284 enclose the THD domain. Cys232 and Cys245 are disulfide-bonded. Asn242 carries N-linked (GlcNAc...) (high mannose) asparagine glycosylation.

It belongs to the tumor necrosis factor family. Homotrimer. Isoform 2 heteromultimerizes with isoform 1, probably limiting the amount of functional isoform 1 on the cell surface. Isoform 3 is unlikely form trimers or bind to BAFF receptors. Post-translationally, the soluble form derives from the membrane form by proteolytic processing. Isoform 2 is not efficiently shed from the membrane unlike isoform 1. In terms of processing, N-glycosylated. As to expression, abundantly expressed in peripheral blood Leukocytes and is specifically expressed in monocytes and macrophages. Also found in the spleen, lymph node, bone marrow, T-cells and dendritic cells. A lower expression seen in placenta, heart, lung, fetal liver, thymus, and pancreas. Isoform 2 is expressed in many myeloid cell lines.

The protein localises to the cell membrane. It is found in the secreted. In terms of biological role, cytokine that binds to TNFRSF13B/TACI and TNFRSF17/BCMA. TNFSF13/APRIL binds to the same 2 receptors. Together, they form a 2 ligands -2 receptors pathway involved in the stimulation of B- and T-cell function and the regulation of humoral immunity. A third B-cell specific BAFF-receptor (BAFFR/BR3) promotes the survival of mature B-cells and the B-cell response. Functionally, isoform 2 seems to inhibit isoform 1 secretion and bioactivity. Acts as a transcription factor for its own parent gene, in association with NF-kappa-B p50 subunit, at least in autoimmune and proliferative B-cell diseases. The presence of Delta4BAFF is essential for soluble BAFF release by IFNG/IFN-gamma-stimulated monocytes and for B-cell survival. It can directly or indirectly regulate the differential expression of a large number of genes involved in the innate immune response and the regulation of apoptosis. This Homo sapiens (Human) protein is Tumor necrosis factor ligand superfamily member 13B (TNFSF13B).